The chain runs to 192 residues: Putative manganese efflux pump MntP (192 aa).

6 consecutive transmembrane segments (helical) span residues 3 to 23 (LIFTSVLIGIGLAMDCLAVSF), 38 to 58 (FILALFFGGFQGGMTLLGWLL), 61 to 81 (GFADAIAAYDHWVAAGLLFII), 101 to 121 (VFNFVAVFILAVATSIDALAV), 130 to 150 (IVPLIPALIIGLISAIFSVGG), and 167 to 187 (ILGGVILTLIGIRILLEHLVW).

The protein belongs to the MntP (TC 9.B.29) family.

It is found in the cell membrane. In terms of biological role, probably functions as a manganese efflux pump. The chain is Putative manganese efflux pump MntP from Methanospirillum hungatei JF-1 (strain ATCC 27890 / DSM 864 / NBRC 100397 / JF-1).